The following is a 144-amino-acid chain: MTIFSRFSYFDSLFSFKKQEPSPIEIIYCNENNGFINIKSLESPTDDSMEADISDREMATILTRNRNNLGKVAIDKKGVNNHCIDLNELKKGLVANEHKLDNDNSTRHQNTYSPEDSVEFDRFDDKQSRILKCSTRRSYLRYKK.

This is an uncharacterized protein from Saccharomyces cerevisiae (strain ATCC 204508 / S288c) (Baker's yeast).